The following is a 154-amino-acid chain: Lipoprotein signal peptidase (154 aa).

2 helical membrane passes run 55–75 (GHMWFFYLITVVVIGIIIYIM) and 84–104 (LFSISLAFILGGAIGNFIDRV). Residues Asp111 and Asp129 contribute to the active site. Residues 124–144 (IFNVADAALSVGVVLMLVYVF) form a helical membrane-spanning segment.

This sequence belongs to the peptidase A8 family.

It localises to the cell membrane. The enzyme catalyses Release of signal peptides from bacterial membrane prolipoproteins. Hydrolyzes -Xaa-Yaa-Zaa-|-(S,diacylglyceryl)Cys-, in which Xaa is hydrophobic (preferably Leu), and Yaa (Ala or Ser) and Zaa (Gly or Ala) have small, neutral side chains.. It participates in protein modification; lipoprotein biosynthesis (signal peptide cleavage). In terms of biological role, this protein specifically catalyzes the removal of signal peptides from prolipoproteins. The polypeptide is Lipoprotein signal peptidase (Listeria monocytogenes serotype 4b (strain CLIP80459)).